A 243-amino-acid chain; its full sequence is CD48 antigen (243 aa).

Positions 1 to 26 (MCSRGWDSCLALELLLLPLSLLVTSI) are cleaved as a signal peptide. Ig-like C2-type domains follow at residues 29 to 127 (HLVH…KLQV) and 132 to 212 (PKPV…VCLS). Asparagine 40, asparagine 44, asparagine 104, asparagine 162, and asparagine 189 each carry an N-linked (GlcNAc...) asparagine glycan. An intrachain disulfide couples cysteine 154 to cysteine 196. The GPI-anchor amidated serine moiety is linked to residue serine 220. Positions 221–243 (FGVEWIASWLVVTVPTILGLLLT) are cleaved as a propeptide — removed in mature form.

As to quaternary structure, interacts with CD2. Interacts with CD244; this interaction is possible not only on different cells (trans interaction) but also on the same cell (cis interaction). Interacts with LCK. As to expression, widely expressed on all hematopoietic cells.

The protein localises to the cell membrane. The protein resides in the membrane raft. It localises to the secreted. In terms of biological role, glycosylphosphatidylinositol (GPI)-anchored cell surface glycoprotein that interacts via its N-terminal immunoglobulin domain with cell surface receptors including CD244/2B4 or CD2 to regulate immune cell function and activation. Participates in T-cell signaling transduction by associating with CD2 and efficiently bringing the Src family protein kinase LCK and LAT to the TCR/CD3 complex. In turn, promotes LCK phosphorylation and subsequent activation. Induces the phosphorylation of the cytoplasmic immunoreceptortyrosine switch motifs (ITSMs) of CD244 initiating a series of signaling events that leads to the generation of the immunological synapse and the directed release of cytolytic granules containing perforin and granzymes by T-lymphocytes and NK-cells. The polypeptide is CD48 antigen (CD48) (Homo sapiens (Human)).